A 320-amino-acid chain; its full sequence is ATP-dependent 6-phosphofructokinase (320 aa).

Residue Gly12 coordinates ATP. 22–26 (RGVVR) serves as a coordination point for ADP. ATP is bound by residues 73 to 74 (RF) and 103 to 106 (GDGS). Residue Asp104 participates in Mg(2+) binding. Substrate is bound at residue 126-128 (TID). Residue Asp128 is the Proton acceptor of the active site. Arg155 contacts ADP. Substrate-binding positions include Arg163 and 170–172 (MGR). ADP contacts are provided by residues 186 to 188 (GCE), Lys212, and 214 to 216 (KKH). Residues Glu223, Arg244, and 250 to 253 (HIQR) each bind substrate.

Belongs to the phosphofructokinase type A (PFKA) family. ATP-dependent PFK group I subfamily. Prokaryotic clade 'B1' sub-subfamily. Homotetramer. The cofactor is Mg(2+).

The protein localises to the cytoplasm. The catalysed reaction is beta-D-fructose 6-phosphate + ATP = beta-D-fructose 1,6-bisphosphate + ADP + H(+). The protein operates within carbohydrate degradation; glycolysis; D-glyceraldehyde 3-phosphate and glycerone phosphate from D-glucose: step 3/4. Allosterically activated by ADP and other diphosphonucleosides, and allosterically inhibited by phosphoenolpyruvate. Functionally, catalyzes the phosphorylation of D-fructose 6-phosphate to fructose 1,6-bisphosphate by ATP, the first committing step of glycolysis. The chain is ATP-dependent 6-phosphofructokinase from Edwardsiella ictaluri (strain 93-146).